The primary structure comprises 251 residues: Cell division protein ZapD (251 aa).

The protein belongs to the ZapD family. In terms of assembly, interacts with FtsZ.

The protein localises to the cytoplasm. Functionally, cell division factor that enhances FtsZ-ring assembly. Directly interacts with FtsZ and promotes bundling of FtsZ protofilaments, with a reduction in FtsZ GTPase activity. In Burkholderia lata (strain ATCC 17760 / DSM 23089 / LMG 22485 / NCIMB 9086 / R18194 / 383), this protein is Cell division protein ZapD.